The primary structure comprises 631 residues: Shootin-1 (631 aa).

N-acetylmethionine is present on methionine 1. Serine 3 and serine 4 each carry phosphoserine. Residues 7–353 (EKQLQLITSL…RVNQSENSVP (347 aa)) adopt a coiled-coil conformation. Serine 101 carries the phosphoserine; by PAK1 modification. Serine 249 carries the post-translational modification Phosphoserine. Residues 343–511 (KRVNQSENSV…SESKSMPVLG (169 aa)) form a disordered region. A compositionally biased stretch (pro residues) spans 352–369 (VPPPPPPPPPLPPPPPNP). A Phosphoserine modification is found at serine 375. Basic and acidic residues predominate over residues 403 to 418 (TDLKRQAVEEMMDRIK). Residues 456 to 465 (LNKSTSSRSL) are compositionally biased toward polar residues. The residue at position 473 (serine 473) is a Phosphoserine. A Phosphothreonine modification is found at threonine 487. Residues 490–505 (ADSSSPTGILATSESK) show a composition bias toward polar residues. A Phosphoserine modification is found at serine 494. Threonine 496 carries the post-translational modification Phosphothreonine. A phosphoserine mark is found at serine 506, serine 515, serine 532, and serine 534. 2 disordered regions span residues 524–566 (KTLE…IGCR) and 579–631 (VVVL…SSNC). Threonine 537 is subject to Phosphothreonine. Polar residues predominate over residues 550 to 561 (CTSSKVTFQPPS). The segment covering 590 to 631 (PQTKDQVAEKDPTQHKEDEGEIQPENKEDSIENVRETDSSNC) has biased composition (basic and acidic residues).

The protein belongs to the shootin family. In terms of assembly, interacts with L1CAM; this interaction occurs in axonal growth cones. Interacts with actin filament retrograde flow; this interaction is enhanced in a netrin-1- and PAK1-dependent manner and promotes F-actin-substrate coupling and concomitant formation of traction forces at axonal growth cones. Interacts with RUFY3. Interacts with PFN2. Interacts (via N-terminus) with KIF20B; this interaction is direct and promotes the association of SHTN1 to microtubules in primary neurons. Associates with microtubule. Post-translationally, phosphorylated on Ser-101 and Ser-249 by PAK1 through a CDC42- and RAC1-dependent signaling pathway, which enhances its association with F-actin retrograde flow in filopodia and lamellipodia of axonal growth cones. Phosphorylation on Ser-101 and Ser-249 is increased by netrin-1.

Its subcellular location is the perikaryon. The protein localises to the cell projection. The protein resides in the axon. It localises to the growth cone. It is found in the cytoplasm. Its subcellular location is the cytoskeleton. The protein localises to the filopodium. The protein resides in the lamellipodium. Functionally, involved in the generation of internal asymmetric signals required for neuronal polarization and neurite outgrowth. Mediates netrin-1-induced F-actin-substrate coupling or 'clutch engagement' within the axon growth cone through activation of CDC42, RAC1 and PAK1-dependent signaling pathway, thereby converting the F-actin retrograde flow into traction forces, concomitantly with filopodium extension and axon outgrowth. Plays a role in cytoskeletal organization by regulating the subcellular localization of phosphoinositide 3-kinase (PI3K) activity at the axonal growth cone. Also plays a role in regenerative neurite outgrowth. In the developing cortex, cooperates with KIF20B to promote both the transition from the multipolar to the bipolar stage and the radial migration of cortical neurons from the ventricular zone toward the superficial layer of the neocortex. Involved in the accumulation of phosphatidylinositol 3,4,5-trisphosphate (PIP3) in the growth cone of primary hippocampal neurons. The sequence is that of Shootin-1 from Homo sapiens (Human).